Consider the following 1371-residue polypeptide: F-actin-uncapping protein LRRC16A (1371 aa).

Met-1 carries the post-translational modification N-acetylmethionine. Ser-122 bears the Phosphoserine mark. LRR repeat units follow at residues 245 to 269 (SNRL…LASA), 275 to 298 (NSGL…SLSI), 304 to 327 (PKGL…SLSQ), 336 to 363 (ASTL…FLAQ), 391 to 418 (LQYL…SFKQ), 423 to 447 (SLAL…LLLG), 481 to 506 (IHNI…VWLS), 543 to 566 (ESPL…IINA), 570 to 593 (NTSL…MLAK), and 654 to 678 (LQKI…AYRL). A coiled-coil region spans residues 710–734 (GDAIQEDLKSAERLMRDAKNSKTLL). Thr-916 carries the post-translational modification Phosphothreonine. Disordered regions lie at residues 957-1000 (PFPS…QPTQ), 1036-1159 (KMDS…RRYG), and 1172-1371 (KAKQ…FIFV). Residues 958-981 (FPSLRQEKRSSGFISELPSEEGKK) form an LRR 11 repeat. Positions 958 to 1082 (FPSLRQEKRS…LIKSRSKSER (125 aa)) are inhibits capping activity of CAPZA2. Phosphoserine is present on Ser-968. Composition is skewed to basic and acidic residues over residues 977–986 (EEGKKLEHFT) and 1036–1061 (KMDS…EKKK). The necessary for localization at the cell membrane stretch occupies residues 1055–1089 (GGDEKKKRDSRKSSGFLNLIKSRSKSERPPTILMT). A phosphoserine mark is found at Ser-1067 and Ser-1094. Composition is skewed to basic and acidic residues over residues 1106–1130 (CPRK…KTPD) and 1139–1148 (EIGKVERSDS). Over residues 1190–1199 (AVSQDSSSPA) the composition is skewed to polar residues. Phosphothreonine is present on Thr-1228. Residues 1231-1243 (KNTKAEPKAEAGS) are compositionally biased toward basic and acidic residues. Low complexity predominate over residues 1244-1265 (RSRSSSSTPTSPKPLLQSPKPS). Ser-1280, Ser-1288, Ser-1291, Ser-1315, Ser-1324, and Ser-1331 each carry phosphoserine. Over residues 1313-1326 (QSSPQPSPRTFSQE) the composition is skewed to polar residues. Positions 1340-1353 (QEQKQRSSSKDGHQ) are enriched in basic and acidic residues. Ser-1360 carries the phosphoserine modification.

The protein belongs to the CARMIL family. In terms of assembly, homodimer. Interacts (via C-terminus) with heterodimer capping protein (CP); this interaction uncaps barbed ends capped by CP, enhances barbed-end actin polymerization and promotes lamellipodial formation and cell migration. Interacts with heterodimer capping protein (CP). Interacts with MYO1E. Interacts with TRIO. As to expression, expressed in lung, placenta, small intestine, liver, thymus, colon, skeletal muscle, heart and brain. Higher expression in kidney.

It is found in the cytoplasm. The protein localises to the cytoskeleton. The protein resides in the cell membrane. Its subcellular location is the cell projection. It localises to the lamellipodium. Cell membrane-cytoskeleton-associated protein that plays a role in the regulation of actin polymerization at the barbed end of actin filaments. Prevents F-actin heterodimeric capping protein (CP) activity at the leading edges of migrating cells, and hence generates uncapped barbed ends and enhances actin polymerization, however, seems unable to nucleate filaments. Plays a role in lamellipodial protrusion formations and cell migration. In Homo sapiens (Human), this protein is F-actin-uncapping protein LRRC16A.